Here is a 449-residue protein sequence, read N- to C-terminus: mRNA-capping enzyme subunit alpha (449 aa).

K66 functions as the N6-GMP-lysine intermediate in the catalytic mechanism. Positions 405-449 (DERKNGAYQHHSSSFSESRQQPKAEPVAEKKQTEPKYVDDDDWSD) are disordered. A compositionally biased stretch (polar residues) spans 414-423 (HHSSSFSESR). Positions 424-442 (QQPKAEPVAEKKQTEPKYV) are enriched in basic and acidic residues.

The protein belongs to the eukaryotic GTase family. As to quaternary structure, heterodimer. The mRNA-capping enzyme is composed of two separate chains alpha and beta, respectively a mRNA guanylyltransferase and an mRNA 5'-triphosphate monophosphatase.

It localises to the nucleus. It catalyses the reaction a 5'-end diphospho-ribonucleoside in mRNA + GTP + H(+) = a 5'-end (5'-triphosphoguanosine)-ribonucleoside in mRNA + diphosphate. Functionally, second step of mRNA capping. Transfer of the GMP moiety of GTP to the 5'-end of RNA via an enzyme-GMP covalent reaction intermediate. The protein is mRNA-capping enzyme subunit alpha (CEG1) of Candida glabrata (strain ATCC 2001 / BCRC 20586 / JCM 3761 / NBRC 0622 / NRRL Y-65 / CBS 138) (Yeast).